A 333-amino-acid chain; its full sequence is Testin-2 (333 aa).

A signal peptide spans 1 to 17 (MIAVLFLAILCLEIDST). 3 disulfides stabilise this stretch: C135/C178, C169/C211, and C269/C322. A glycan (N-linked (GlcNAc...) asparagine) is linked at N173. Catalysis depends on residues H276 and N300.

This sequence belongs to the peptidase C1 family. Expressed in testis and ovary. Low level in spleen, epididymis, kidney, and uterus. Expressed in primary cultures of Sertoli cells.

The protein localises to the secreted. In Mus musculus (Mouse), this protein is Testin-2.